Reading from the N-terminus, the 340-residue chain is Protein SSUH2 homolog (340 aa).

A compositionally biased stretch (acidic residues) spans 1–11 (MDRDPSEEDSM). A disordered region spans residues 1-20 (MDRDPSEEDSMADLSFEAES).

Widely expressed, with highest levels in the liver, intestine, tongue and underjaw.

The protein localises to the cytoplasm. The protein resides in the nucleus. Its function is as follows. Plays a role in odontogenesis. The sequence is that of Protein SSUH2 homolog from Mus musculus (Mouse).